Consider the following 640-residue polypeptide: Chaperone protein DnaK (640 aa).

Position 196 is a phosphothreonine; by autocatalysis (Thr-196). Disordered regions lie at residues Gly-487–Ile-526 and Ser-593–Lys-640. Over residues Thr-501–Ile-526 the composition is skewed to basic and acidic residues. Polar residues predominate over residues Leu-595–Asp-613. Acidic residues predominate over residues Ala-630–Lys-640.

Belongs to the heat shock protein 70 family.

In terms of biological role, acts as a chaperone. The protein is Chaperone protein DnaK of Pelodictyon phaeoclathratiforme (strain DSM 5477 / BU-1).